The following is a 182-amino-acid chain: Succinate dehydrogenase cytochrome b560 subunit, mitochondrial (182 aa).

Residues 65–94 form a helical membrane-spanning segment; the sequence is LTWMLSGFHRISGCVMAGTLLVGGIGFAVL. At 95–114 the chain is on the mitochondrial intermembrane side; that stretch reads PFDFTAFVDFIRSWNLPCAV. A helical membrane pass occupies residues 115–139; it reads TAVFKYIIAFPIIFHTLNGIRFLGF. Residue His129 coordinates heme. At 140–147 the chain is on the mitochondrial matrix side; the sequence is DLAKGVNN. The helical transmembrane segment at 148-169 threads the bilayer; the sequence is VGQIYKSGYLVSGLSAILALAI. The Mitochondrial intermembrane portion of the chain corresponds to 170 to 172; it reads VFN.

The protein belongs to the cytochrome b560 family. Component of complex II composed of four subunits: a flavoprotein (FP), iron-sulfur protein (IP), and a cytochrome b560 composed of two integral membrane proteins. It depends on heme as a cofactor.

The protein localises to the mitochondrion inner membrane. It participates in carbohydrate metabolism; tricarboxylic acid cycle. Membrane-anchoring subunit of succinate dehydrogenase (SDH) that is involved in complex II of the mitochondrial electron transport chain and is responsible for transferring electrons from succinate to ubiquinone (coenzyme Q). Mediates resistance to enteropathogenic E.coli infection. This is Succinate dehydrogenase cytochrome b560 subunit, mitochondrial (mev-1) from Caenorhabditis elegans.